Here is a 1165-residue protein sequence, read N- to C-terminus: ATP-dependent helicase/deoxyribonuclease subunit B (1165 aa).

In terms of domain architecture, UvrD-like helicase ATP-binding spans 1-298 (MALRFILGRA…AHLEREFFRR (298 aa)). ATP is bound at residue 8-15 (GRAGTGKT). Residues 279 to 584 (PARFRANPAL…QLALIPPALD (306 aa)) enclose the UvrD-like helicase C-terminal domain. [4Fe-4S] cluster-binding residues include Cys-800, Cys-1119, Cys-1122, and Cys-1128.

The protein belongs to the helicase family. AddB/RexB type 1 subfamily. As to quaternary structure, heterodimer of AddA and AddB. The cofactor is Mg(2+). [4Fe-4S] cluster serves as cofactor.

In terms of biological role, the heterodimer acts as both an ATP-dependent DNA helicase and an ATP-dependent, dual-direction single-stranded exonuclease. Recognizes the chi site generating a DNA molecule suitable for the initiation of homologous recombination. The AddB subunit has 5' -&gt; 3' nuclease activity but not helicase activity. The protein is ATP-dependent helicase/deoxyribonuclease subunit B of Desulforudis audaxviator (strain MP104C).